Here is a 314-residue protein sequence, read N- to C-terminus: MSDLPFTLDQLKIIKTIHREGSFKTAAKKLYISQPAVSRQVQNLERQLNTPIFYRDKRKARLTETGHILVKYAEQILSLCEETCQALDELKSINSGTLVIGASQTTGTYLMPRLIGIFRHKYPQISIELKVHSTRRISWGVANGEIDLAIVGGEVPPELQGTLEIISYAEDELALIIPQAHPFATLQSIQKEDLYRLRFIALDTQSTIRSVIENTLTQSGIDSRYFKIEMELNSIEAIKNAVQSGLGAAFVSVSAISKELELGILHWAKIEDVTIKRTLSILINPKRYYANPIKNFEKEIMEILLTSAASTNNP.

One can recognise an HTH lysR-type domain in the interval 6–63; the sequence is FTLDQLKIIKTIHREGSFKTAAKKLYISQPAVSRQVQNLERQLNTPIFYRDKRKARLT. Residues 23–42 constitute a DNA-binding region (H-T-H motif); the sequence is FKTAAKKLYISQPAVSRQVQ.

It belongs to the LysR transcriptional regulatory family.

The protein localises to the plastid. Its subcellular location is the chloroplast. Trans-acting transcriptional regulator of RuBisCO genes (rbcL and rbcS) expression. In Emiliania huxleyi (Coccolithophore), this protein is Probable RuBisCO transcriptional regulator (rbcR).